Reading from the N-terminus, the 94-residue chain is Small ribosomal subunit protein bS16c (94 aa).

It belongs to the bacterial ribosomal protein bS16 family.

It is found in the plastid. The protein resides in the chloroplast. The chain is Small ribosomal subunit protein bS16c from Phalaenopsis aphrodite subsp. formosana (Moth orchid).